The sequence spans 180 residues: Adenine phosphoribosyltransferase (180 aa).

At Ser2 the chain carries N-acetylserine. Residues Ser15 and Ser30 each carry the phosphoserine modification. Tyr60 carries the post-translational modification Phosphotyrosine. Ser66 carries the post-translational modification Phosphoserine. Lys114 carries the post-translational modification N6-acetyllysine. At Thr135 the chain carries Phosphothreonine.

It belongs to the purine/pyrimidine phosphoribosyltransferase family. In terms of assembly, homodimer.

The protein localises to the cytoplasm. It catalyses the reaction AMP + diphosphate = 5-phospho-alpha-D-ribose 1-diphosphate + adenine. It participates in purine metabolism; AMP biosynthesis via salvage pathway; AMP from adenine: step 1/1. Functionally, catalyzes a salvage reaction resulting in the formation of AMP, that is energically less costly than de novo synthesis. This Mus musculus (Mouse) protein is Adenine phosphoribosyltransferase.